The primary structure comprises 311 residues: Protein N-terminal asparagine amidohydrolase (311 aa).

In terms of assembly, monomer.

Its subcellular location is the cytoplasm. It catalyses the reaction N-terminal L-asparaginyl-[protein] + H2O + H(+) = N-terminal L-aspartyl-[protein] + NH4(+). N-terminal asparagine deamidase that mediates deamidation of N-terminal asparagine residues to aspartate. Required for the ubiquitin-dependent turnover of intracellular proteins that initiate with Met-Asn. These proteins are acetylated on the retained initiator methionine and can subsequently be modified by the removal of N-acetyl methionine by acylaminoacid hydrolase (AAH). Conversion of the resulting N-terminal asparagine to aspartate by NTAN1/PNAD renders the protein susceptible to arginylation, polyubiquitination and degradation as specified by the N-end rule. This enzyme does not act on substrates with internal or C-terminal asparagines and does not act on glutamine residues in any position. The polypeptide is Protein N-terminal asparagine amidohydrolase (NTAN1) (Sus scrofa (Pig)).